A 159-amino-acid polypeptide reads, in one-letter code: Oleosin Cor a 12 (159 aa).

The segment covering 1 to 10 has biased composition (polar residues); it reads MADRPQQLQV. Residues 1 to 24 are disordered; the sequence is MADRPQQLQVHPQRGHGHYEGGIK. Transmembrane regions (helical) follow at residues 45–65, 70–90, and 92–112; these read VGGT…IGLL, LFII…LAVA, and FLSS…VLNY.

It belongs to the oleosin family. Expressed in seeds.

The protein resides in the lipid droplet. The protein localises to the membrane. In terms of biological role, may have a structural role to stabilize the lipid body during desiccation of the seed by preventing coalescence of the oil. Probably interacts with both lipid and phospholipid moieties of lipid bodies. May also provide recognition signals for specific lipase anchorage in lipolysis during seedling growth. This Corylus avellana (European hazel) protein is Oleosin Cor a 12.